The following is a 326-amino-acid chain: Dehydrogenase/reductase SDR family protein 7-like (326 aa).

The Cytoplasmic portion of the chain corresponds to Met-1 to Val-17. Residues Leu-18–Ile-38 traverse the membrane as a helical; Signal-anchor for type II membrane protein segment. Residues Trp-39 to Thr-326 lie on the Peroxisomal side of the membrane. Leu-57–Ile-81 contributes to the NAD(+) binding site. Ser-193 lines the substrate pocket. Tyr-206 functions as the Proton acceptor in the catalytic mechanism.

Belongs to the short-chain dehydrogenases/reductases (SDR) family.

The protein localises to the peroxisome membrane. Its function is as follows. Putative oxidoreductase. This chain is Dehydrogenase/reductase SDR family protein 7-like, found in Drosophila melanogaster (Fruit fly).